A 222-amino-acid chain; its full sequence is Protein SHI RELATED SEQUENCE 4 (222 aa).

Positions 72, 75, 83, 88, 92, and 99 each coordinate Zn(2+). A DNA-binding region (zn(2)-C6 fungal-type; degenerate) is located at residues 72-99; that stretch reads CQECGNQAKKGCTHGRCRTCCKSNGLHC. A disordered region spans residues 114–137; it reads RERQQQLQTPTSNPTGGSGRVGKY. A compositionally biased stretch (polar residues) spans 118-128; sequence QQLQTPTSNPT. The Required for homo- and heterodimerization motif lies at 191 to 194; it reads IAGH.

It belongs to the SHI protein family. Expressed in cotyledon tips, leaf primordia, hydathodes, stipules, and lateral root primordia and weakly at the edges of petals and sepals.

The protein resides in the nucleus. Its function is as follows. Transcription activator that binds DNA on 5'-ACTCTAC-3' and promotes auxin homeostasis-regulating gene expression (e.g. YUC genes), as well as genes affecting stamen development, cell expansion and timing of flowering. Synergistically with other SHI-related proteins, regulates gynoecium, stamen and leaf development in a dose-dependent manner, controlling apical-basal patterning. Promotes style and stigma formation, and influences vascular development during gynoecium development. May also have a role in the formation and/or maintenance of the shoot apical meristem (SAM). This chain is Protein SHI RELATED SEQUENCE 4 (SRS4), found in Arabidopsis thaliana (Mouse-ear cress).